Here is a 426-residue protein sequence, read N- to C-terminus: C2H2 type master regulator of conidiophore development brlA (426 aa).

Disordered stretches follow at residues Cys-25–Thr-71 and Gly-281–Leu-302. Over residues Ser-30–Ser-44 the composition is skewed to low complexity. Polar residues predominate over residues Ile-45–Glu-58. Over residues Pro-288–Pro-297 the composition is skewed to basic residues. C2H2-type zinc fingers lie at residues Phe-316 to His-340 and His-346 to His-371. The disordered stretch occupies residues Leu-384 to Glu-426.

The protein resides in the nucleus. Its function is as follows. BrlA, abaA and wetA are pivotal regulators of conidiophore development and conidium maturation. They act individually and together to regulate their own expression and that of numerous other sporulation-specific genes. Binds promoters of target genes at brlA response elements (BREs) containing the conserved sequence 5'-(C/A)(A/G)AGGG(G/A)-3'. Positively regulates expression of the gliotoxin biosynthetic gene cluster in actively growing vegetative cells, and likely bridges morphological and chemical development during the life-cycle. Regulates (directly or indirectly) the ergot cluster genes. Positively regulates expression of the fumiquinazoline C biosynthetic gene cluster. Positively regulates expression of the melanin biosynthetic gene cluster. Mediates repression of ribosomal protein gene expression in response to nitrogen depletion. The sequence is that of C2H2 type master regulator of conidiophore development brlA from Aspergillus fumigatus (strain ATCC MYA-4609 / CBS 101355 / FGSC A1100 / Af293) (Neosartorya fumigata).